Here is a 130-residue protein sequence, read N- to C-terminus: Large ribosomal subunit protein bL20 (130 aa).

Belongs to the bacterial ribosomal protein bL20 family.

Its function is as follows. Binds directly to 23S ribosomal RNA and is necessary for the in vitro assembly process of the 50S ribosomal subunit. It is not involved in the protein synthesizing functions of that subunit. In Clavibacter sepedonicus (Clavibacter michiganensis subsp. sepedonicus), this protein is Large ribosomal subunit protein bL20.